The chain runs to 346 residues: Small ribosomal subunit biogenesis GTPase RsgA (346 aa).

A disordered region spans residues Met-1–Lys-26. The segment covering Thr-7–Lys-20 has biased composition (polar residues). In terms of domain architecture, CP-type G spans Glu-103 to Phe-271. GTP is bound by residues Asn-159 to Asp-162 and Gly-213 to Ser-221. Residues Cys-295, Cys-300, His-302, and Cys-308 each contribute to the Zn(2+) site.

It belongs to the TRAFAC class YlqF/YawG GTPase family. RsgA subfamily. As to quaternary structure, monomer. Associates with 30S ribosomal subunit, binds 16S rRNA. It depends on Zn(2+) as a cofactor.

It is found in the cytoplasm. Functionally, one of several proteins that assist in the late maturation steps of the functional core of the 30S ribosomal subunit. Helps release RbfA from mature subunits. May play a role in the assembly of ribosomal proteins into the subunit. Circularly permuted GTPase that catalyzes slow GTP hydrolysis, GTPase activity is stimulated by the 30S ribosomal subunit. The sequence is that of Small ribosomal subunit biogenesis GTPase RsgA from Haemophilus influenzae (strain 86-028NP).